The following is a 1385-amino-acid chain: DNA-directed RNA polymerase subunit beta' (1385 aa).

Cys-72, Cys-74, Cys-87, and Cys-90 together coordinate Zn(2+). Asp-467, Asp-469, and Asp-471 together coordinate Mg(2+). Zn(2+) contacts are provided by Cys-829, Cys-910, Cys-917, and Cys-920.

The protein belongs to the RNA polymerase beta' chain family. In terms of assembly, the RNAP catalytic core consists of 2 alpha, 1 beta, 1 beta' and 1 omega subunit. When a sigma factor is associated with the core the holoenzyme is formed, which can initiate transcription. It depends on Mg(2+) as a cofactor. The cofactor is Zn(2+).

It catalyses the reaction RNA(n) + a ribonucleoside 5'-triphosphate = RNA(n+1) + diphosphate. In terms of biological role, DNA-dependent RNA polymerase catalyzes the transcription of DNA into RNA using the four ribonucleoside triphosphates as substrates. The chain is DNA-directed RNA polymerase subunit beta' from Elusimicrobium minutum (strain Pei191).